Consider the following 212-residue polypeptide: Imidazole glycerol phosphate synthase subunit HisH (212 aa).

Residues 1 to 211 (MIGVIDYGMG…KQFTQEQKVK (211 aa)) form the Glutamine amidotransferase type-1 domain. Catalysis depends on cysteine 79, which acts as the Nucleophile. Catalysis depends on residues histidine 186 and glutamate 188.

As to quaternary structure, heterodimer of HisH and HisF.

It localises to the cytoplasm. It catalyses the reaction 5-[(5-phospho-1-deoxy-D-ribulos-1-ylimino)methylamino]-1-(5-phospho-beta-D-ribosyl)imidazole-4-carboxamide + L-glutamine = D-erythro-1-(imidazol-4-yl)glycerol 3-phosphate + 5-amino-1-(5-phospho-beta-D-ribosyl)imidazole-4-carboxamide + L-glutamate + H(+). It carries out the reaction L-glutamine + H2O = L-glutamate + NH4(+). It functions in the pathway amino-acid biosynthesis; L-histidine biosynthesis; L-histidine from 5-phospho-alpha-D-ribose 1-diphosphate: step 5/9. Functionally, IGPS catalyzes the conversion of PRFAR and glutamine to IGP, AICAR and glutamate. The HisH subunit catalyzes the hydrolysis of glutamine to glutamate and ammonia as part of the synthesis of IGP and AICAR. The resulting ammonia molecule is channeled to the active site of HisF. The protein is Imidazole glycerol phosphate synthase subunit HisH of Bacillus licheniformis (strain ATCC 14580 / DSM 13 / JCM 2505 / CCUG 7422 / NBRC 12200 / NCIMB 9375 / NCTC 10341 / NRRL NRS-1264 / Gibson 46).